A 399-amino-acid chain; its full sequence is Probable 3-ketosteroid-9-alpha-monooxygenase, oxygenase component (399 aa).

Positions 26–128 (WHCLGLVRDF…VAEVSGQLFV (103 aa)) constitute a Rieske domain. Residues Cys-67, His-69, Cys-86, and His-89 each coordinate [2Fe-2S] cluster. Positions 175, 181, 186, and 307 each coordinate Fe cation.

Homotrimer. The two-component system 3-ketosteroid-9-alpha-monooxygenase is composed of an oxygenase component KshA and a reductase component KshB. [2Fe-2S] cluster serves as cofactor. It depends on Fe cation as a cofactor.

Functionally, could catalyze the introduction of a 9alpha-hydroxyl moiety into the ring B of 3-ketosteroid substrates. The protein is Probable 3-ketosteroid-9-alpha-monooxygenase, oxygenase component of Rhodococcus rhodochrous.